Reading from the N-terminus, the 406-residue chain is Phosphoglycerate kinase (406 aa).

Substrate is bound by residues 22–24 (DLN), R37, 60–63 (HLGN), R119, and R152. Residues K202, E325, and 355–358 (GGDT) each bind ATP.

This sequence belongs to the phosphoglycerate kinase family. Monomer.

It localises to the cytoplasm. It catalyses the reaction (2R)-3-phosphoglycerate + ATP = (2R)-3-phospho-glyceroyl phosphate + ADP. It functions in the pathway carbohydrate degradation; glycolysis; pyruvate from D-glyceraldehyde 3-phosphate: step 2/5. This is Phosphoglycerate kinase from Orientia tsutsugamushi (strain Ikeda) (Rickettsia tsutsugamushi).